The chain runs to 298 residues: Tyrosine recombinase XerD (298 aa).

The Core-binding (CB) domain occupies 3–88 (ALDHPLIDQF…GLRGFFRYLL (86 aa)). In terms of domain architecture, Tyr recombinase spans 109–292 (PLPKSLSEAD…AKARLQQLHA (184 aa)). Residues R149, K173, H244, R247, and H270 contribute to the active site. The active-site O-(3'-phospho-DNA)-tyrosine intermediate is the Y279.

This sequence belongs to the 'phage' integrase family. XerD subfamily. In terms of assembly, forms a cyclic heterotetrameric complex composed of two molecules of XerC and two molecules of XerD.

The protein resides in the cytoplasm. Functionally, site-specific tyrosine recombinase, which acts by catalyzing the cutting and rejoining of the recombining DNA molecules. The XerC-XerD complex is essential to convert dimers of the bacterial chromosome into monomers to permit their segregation at cell division. It also contributes to the segregational stability of plasmids. The chain is Tyrosine recombinase XerD from Pseudomonas putida (strain ATCC 47054 / DSM 6125 / CFBP 8728 / NCIMB 11950 / KT2440).